Consider the following 518-residue polypeptide: Coiled-coil domain-containing protein 82 (518 aa).

Basic residues predominate over residues M1–K14. The tract at residues M1 to G266 is disordered. Residues Q16 to H27 are compositionally biased toward basic and acidic residues. The segment covering D38–L67 has biased composition (acidic residues). The span at D68 to K89 shows a compositional bias: basic and acidic residues. The segment covering S92–S107 has biased composition (polar residues). Residues E111–H127 show a composition bias toward basic and acidic residues. Phosphoserine occurs at positions 170 and 194. Positions D191–E201 are enriched in acidic residues. T202 bears the Phosphothreonine mark. A coiled-coil region spans residues E204–N232. Residues H215–S225 are compositionally biased toward basic and acidic residues. Acidic residues predominate over residues G249–G266. S305 is modified (phosphoserine).

This Mus musculus (Mouse) protein is Coiled-coil domain-containing protein 82 (Ccdc82).